Consider the following 159-residue polypeptide: 6,7-dimethyl-8-ribityllumazine synthase (159 aa).

5-amino-6-(D-ribitylamino)uracil contacts are provided by residues F22, 57 to 59 (TYE), and 81 to 83 (TII). 86–87 (ST) lines the (2S)-2-hydroxy-3-oxobutyl phosphate pocket. H89 acts as the Proton donor in catalysis. M114 lines the 5-amino-6-(D-ribitylamino)uracil pocket. (2S)-2-hydroxy-3-oxobutyl phosphate is bound at residue R128.

The protein belongs to the DMRL synthase family. As to quaternary structure, forms an icosahedral capsid composed of 60 subunits, arranged as a dodecamer of pentamers.

The catalysed reaction is (2S)-2-hydroxy-3-oxobutyl phosphate + 5-amino-6-(D-ribitylamino)uracil = 6,7-dimethyl-8-(1-D-ribityl)lumazine + phosphate + 2 H2O + H(+). It participates in cofactor biosynthesis; riboflavin biosynthesis; riboflavin from 2-hydroxy-3-oxobutyl phosphate and 5-amino-6-(D-ribitylamino)uracil: step 1/2. In terms of biological role, catalyzes the formation of 6,7-dimethyl-8-ribityllumazine by condensation of 5-amino-6-(D-ribitylamino)uracil with 3,4-dihydroxy-2-butanone 4-phosphate. This is the penultimate step in the biosynthesis of riboflavin. The chain is 6,7-dimethyl-8-ribityllumazine synthase from Buchnera aphidicola subsp. Schizaphis graminum (strain Sg).